A 155-amino-acid chain; its full sequence is 6,7-dimethyl-8-ribityllumazine synthase (155 aa).

5-amino-6-(D-ribitylamino)uracil is bound by residues Phe22, 56–58 (AFE), and 80–82 (AVI). 85–86 (ST) lines the (2S)-2-hydroxy-3-oxobutyl phosphate pocket. Residue His88 is the Proton donor of the active site. Residue Phe113 participates in 5-amino-6-(D-ribitylamino)uracil binding. Residue Arg127 coordinates (2S)-2-hydroxy-3-oxobutyl phosphate.

The protein belongs to the DMRL synthase family.

It carries out the reaction (2S)-2-hydroxy-3-oxobutyl phosphate + 5-amino-6-(D-ribitylamino)uracil = 6,7-dimethyl-8-(1-D-ribityl)lumazine + phosphate + 2 H2O + H(+). It participates in cofactor biosynthesis; riboflavin biosynthesis; riboflavin from 2-hydroxy-3-oxobutyl phosphate and 5-amino-6-(D-ribitylamino)uracil: step 1/2. Catalyzes the formation of 6,7-dimethyl-8-ribityllumazine by condensation of 5-amino-6-(D-ribitylamino)uracil with 3,4-dihydroxy-2-butanone 4-phosphate. This is the penultimate step in the biosynthesis of riboflavin. The protein is 6,7-dimethyl-8-ribityllumazine synthase of Caldicellulosiruptor bescii (strain ATCC BAA-1888 / DSM 6725 / KCTC 15123 / Z-1320) (Anaerocellum thermophilum).